The primary structure comprises 88 residues: Long neurotoxin LNTX-1 (88 aa).

The signal sequence occupies residues M1–A21. Disulfide bonds link C24–C42, C35–C63, C48–C52, C67–C78, and C79–C84.

The protein belongs to the three-finger toxin family. Long-chain subfamily. Type II alpha-neurotoxin sub-subfamily. In terms of tissue distribution, expressed by the venom gland.

The protein resides in the secreted. Functionally, binds with high affinity to muscular (alpha-1/CHRNA1) and neuronal (alpha-7/CHRNA7) nicotinic acetylcholine receptor (nAChR) and inhibits acetylcholine from binding to the receptor, thereby impairing neuromuscular and neuronal transmission. This is Long neurotoxin LNTX-1 from Demansia vestigiata (Lesser black whip snake).